Consider the following 861-residue polypeptide: Leucine--tRNA ligase (861 aa).

The 'HIGH' region motif lies at 42–52 (PYPSGKLHMGH). A 'KMSKS' region motif is present at residues 620–624 (KMSKS). Residue K623 coordinates ATP.

This sequence belongs to the class-I aminoacyl-tRNA synthetase family.

Its subcellular location is the cytoplasm. It carries out the reaction tRNA(Leu) + L-leucine + ATP = L-leucyl-tRNA(Leu) + AMP + diphosphate. The polypeptide is Leucine--tRNA ligase (Hahella chejuensis (strain KCTC 2396)).